The following is a 98-amino-acid chain: MTSNALYELFRRRLPRAPVNTVMFLTRRTRDGFCGRLTSIATNSHYTMFVLDHGSVRIERPSQSEVDCASLMETLKRIRLRNSWVASEDELDVSRGDA.

It belongs to the HHV-5 UL19 protein family.

This is an uncharacterized protein from Human cytomegalovirus (strain AD169) (HHV-5).